A 355-amino-acid polypeptide reads, in one-letter code: Tetraacyldisaccharide 4'-kinase (355 aa).

Residue 64-71 coordinates ATP; the sequence is YVGGTGKT. Residues 206–226 form a disordered region; it reads NRAPQSSATPTAASGQGPRRA. Low complexity predominate over residues 208–222; that stretch reads APQSSATPTAASGQG.

It belongs to the LpxK family.

The enzyme catalyses a lipid A disaccharide + ATP = a lipid IVA + ADP + H(+). It functions in the pathway glycolipid biosynthesis; lipid IV(A) biosynthesis; lipid IV(A) from (3R)-3-hydroxytetradecanoyl-[acyl-carrier-protein] and UDP-N-acetyl-alpha-D-glucosamine: step 6/6. In terms of biological role, transfers the gamma-phosphate of ATP to the 4'-position of a tetraacyldisaccharide 1-phosphate intermediate (termed DS-1-P) to form tetraacyldisaccharide 1,4'-bis-phosphate (lipid IVA). The polypeptide is Tetraacyldisaccharide 4'-kinase (Bordetella petrii (strain ATCC BAA-461 / DSM 12804 / CCUG 43448)).